We begin with the raw amino-acid sequence, 442 residues long: O-methyltransferase pgmB (442 aa).

Position 291 (Asp-291) interacts with S-adenosyl-L-methionine. His-341 functions as the Proton acceptor in the catalytic mechanism.

It belongs to the class I-like SAM-binding methyltransferase superfamily. Cation-independent O-methyltransferase family.

The protein operates within pigment biosynthesis. It functions in the pathway secondary metabolite biosynthesis. Functionally, O-methyltransferase; part of the gene cluster that mediates the biosynthesis of pleosporalin A, ascomycone A, as well as a third cryptic naphthoquinone derived pigment, all responsible for the coloration of conidia. Specifically methylates position C-6 of the pgmA product 3-acetonyl-1,6,8-trihydroxy-2-naphthaldehyde to yield fusarubinaldehyde. The pathway begins with the biosynthesis of the cyclized heptaketide 3-acetonyl-1,6,8-trihydroxy-2-naphthaldehyde by the NR-PKS pgmA. The C-6 hydroxyl group is further methylated by the O-methyltransferase pgmB to yield fusarubinaldehyde which is in turn oxidized by the cytochrome P450 monooxygenase pgmC at C-9. The C-1 hydroxyl group is then methylated spontaneously. Although pgmE, pgmD and pgmH are essential for the production of pleosporalin A, it is not the case for the 2 other final products and it remains difficult to assign a specific function to each enzyme. PgmF and pgmG seem not to be involved in pigment biosynthesis although they were regulated by the cluster-specific transcription factor pgmR. This Aspergillus terreus protein is O-methyltransferase pgmB.